Here is a 213-residue protein sequence, read N- to C-terminus: Superoxide dismutase [Fe] (213 aa).

Fe cation-binding residues include His-26, His-73, Asp-156, and His-160.

It belongs to the iron/manganese superoxide dismutase family. In terms of assembly, homodimer. Fe cation serves as cofactor.

The enzyme catalyses 2 superoxide + 2 H(+) = H2O2 + O2. Destroys superoxide anion radicals which are normally produced within the cells and which are toxic to biological systems. The chain is Superoxide dismutase [Fe] (sodB) from Helicobacter pylori (strain J99 / ATCC 700824) (Campylobacter pylori J99).